The primary structure comprises 326 residues: Acetyl-coenzyme A carboxylase carboxyl transferase subunit alpha (326 aa).

A CoA carboxyltransferase C-terminal domain is found at 45 to 298; it reads LEARAMQLRE…KQVLLENLDE (254 aa).

This sequence belongs to the AccA family. Acetyl-CoA carboxylase is a heterohexamer composed of biotin carboxyl carrier protein (AccB), biotin carboxylase (AccC) and two subunits each of ACCase subunit alpha (AccA) and ACCase subunit beta (AccD).

The protein resides in the cytoplasm. It carries out the reaction N(6)-carboxybiotinyl-L-lysyl-[protein] + acetyl-CoA = N(6)-biotinyl-L-lysyl-[protein] + malonyl-CoA. The protein operates within lipid metabolism; malonyl-CoA biosynthesis; malonyl-CoA from acetyl-CoA: step 1/1. Component of the acetyl coenzyme A carboxylase (ACC) complex. First, biotin carboxylase catalyzes the carboxylation of biotin on its carrier protein (BCCP) and then the CO(2) group is transferred by the carboxyltransferase to acetyl-CoA to form malonyl-CoA. The sequence is that of Acetyl-coenzyme A carboxylase carboxyl transferase subunit alpha from Nostoc punctiforme (strain ATCC 29133 / PCC 73102).